Here is a 432-residue protein sequence, read N- to C-terminus: MGKSVVVLGAQWGDEGKGKIVDLLTDRVKYVVRYQGGHNAGHTLIINGEKTVLRLIPSGILHNNVTCLIGNGVVLSPSALMQEMGELESRGINVRERLLISEACPLIMPYHVAMDHAREAALGNNKIGTTGRGIGPAYEDKVARRGLRVSDLFNKEKFAAKLKNVLDYYNFQLVQYYKAEPVDYQKTLDDVMAIADIILGMVADISTILDTARKNGDNILFEGAQGAMLDIDHGTYPFVTSSNTTAGGVATGAGFGPRNIDYVLGIIKAYCTRVGGGPFTTELFDETGAEIARKGNEFGAVTGRPRRCGWFDAVAIRRAIQVNSISGFCMTKLDVLDGFDEVKICVGYKLPSGEVVDYAPLSAKDWEGVEPVYESMPGWKENTFGVTDYNKLPAAVHNYVKRIEQVTGVPVAILSTGPDRVETMILQDPFKQ.

GTP is bound by residues 13–19 (GDEGKGK) and 41–43 (GHT). The active-site Proton acceptor is D14. D14 and G41 together coordinate Mg(2+). Residues 14-17 (DEGK), 39-42 (NAGH), T130, R144, Q225, T240, and R304 contribute to the IMP site. H42 functions as the Proton donor in the catalytic mechanism. Substrate is bound at residue 300-306 (AVTGRPR). Residues R306, 332–334 (KLD), and 415–417 (STG) contribute to the GTP site.

It belongs to the adenylosuccinate synthetase family. In terms of assembly, homodimer. Requires Mg(2+) as cofactor.

Its subcellular location is the cytoplasm. It carries out the reaction IMP + L-aspartate + GTP = N(6)-(1,2-dicarboxyethyl)-AMP + GDP + phosphate + 2 H(+). Its pathway is purine metabolism; AMP biosynthesis via de novo pathway; AMP from IMP: step 1/2. Its function is as follows. Plays an important role in the de novo pathway of purine nucleotide biosynthesis. Catalyzes the first committed step in the biosynthesis of AMP from IMP. This chain is Adenylosuccinate synthetase, found in Actinobacillus succinogenes (strain ATCC 55618 / DSM 22257 / CCUG 43843 / 130Z).